We begin with the raw amino-acid sequence, 511 residues long: Maturase K (511 aa).

The protein belongs to the intron maturase 2 family. MatK subfamily.

The protein resides in the plastid. It is found in the chloroplast. Its function is as follows. Usually encoded in the trnK tRNA gene intron. Probably assists in splicing its own and other chloroplast group II introns. In Brachypodium sylvaticum (False brome), this protein is Maturase K.